The primary structure comprises 177 residues: Large ribosomal subunit protein uL6 (177 aa).

This sequence belongs to the universal ribosomal protein uL6 family. Part of the 50S ribosomal subunit.

This protein binds to the 23S rRNA, and is important in its secondary structure. It is located near the subunit interface in the base of the L7/L12 stalk, and near the tRNA binding site of the peptidyltransferase center. This Shewanella amazonensis (strain ATCC BAA-1098 / SB2B) protein is Large ribosomal subunit protein uL6.